The sequence spans 181 residues: Ribulose bisphosphate carboxylase small subunit, chloroplastic (181 aa).

The transit peptide at 1–56 directs the protein to the chloroplast; it reads MASISSSAIATVNRTTSTQASLAAPFTGLKSNVAFPVTKKANNDFSSLPSNGGRVQ.

It belongs to the RuBisCO small chain family. As to quaternary structure, heterohexadecamer of 8 large and 8 small subunits.

The protein localises to the plastid. The protein resides in the chloroplast. Functionally, ruBisCO catalyzes two reactions: the carboxylation of D-ribulose 1,5-bisphosphate, the primary event in carbon dioxide fixation, as well as the oxidative fragmentation of the pentose substrate. Both reactions occur simultaneously and in competition at the same active site. Although the small subunit is not catalytic it is essential for maximal activity. The protein is Ribulose bisphosphate carboxylase small subunit, chloroplastic of Lactuca sativa (Garden lettuce).